We begin with the raw amino-acid sequence, 141 residues long: Galactose-6-phosphate isomerase subunit LacA (141 aa).

Belongs to the LacAB/RpiB family. Heteromultimeric protein consisting of LacA and LacB.

It catalyses the reaction aldehydo-D-galactose 6-phosphate = keto-D-tagatose 6-phosphate. Its pathway is carbohydrate metabolism; D-galactose 6-phosphate degradation; D-tagatose 6-phosphate from D-galactose 6-phosphate: step 1/1. This chain is Galactose-6-phosphate isomerase subunit LacA, found in Streptococcus pneumoniae serotype 4 (strain ATCC BAA-334 / TIGR4).